The primary structure comprises 248 residues: Tryptophan synthase alpha chain (248 aa).

Residues Glu36 and Asp47 each act as proton acceptor in the active site.

Belongs to the TrpA family. Tetramer of two alpha and two beta chains.

It carries out the reaction (1S,2R)-1-C-(indol-3-yl)glycerol 3-phosphate + L-serine = D-glyceraldehyde 3-phosphate + L-tryptophan + H2O. It functions in the pathway amino-acid biosynthesis; L-tryptophan biosynthesis; L-tryptophan from chorismate: step 5/5. The alpha subunit is responsible for the aldol cleavage of indoleglycerol phosphate to indole and glyceraldehyde 3-phosphate. This is Tryptophan synthase alpha chain from Pyrococcus furiosus (strain ATCC 43587 / DSM 3638 / JCM 8422 / Vc1).